Consider the following 113-residue polypeptide: Protein Wnt-10 (113 aa).

Ser1 is lipidated: O-palmitoleoyl serine; by PORCN. Cysteines 79 and 94 form a disulfide.

It belongs to the Wnt family. Post-translationally, palmitoleoylation is required for efficient binding to frizzled receptors. Depalmitoleoylation leads to Wnt signaling pathway inhibition.

The protein resides in the secreted. It is found in the extracellular space. The protein localises to the extracellular matrix. Functionally, ligand for members of the frizzled family of seven transmembrane receptors. Probable developmental protein. May be a signaling molecule which affects the development of discrete regions of tissues. Is likely to signal over only few cell diameters. The sequence is that of Protein Wnt-10 (WNT-10) from Eptatretus stoutii (Pacific hagfish).